The primary structure comprises 294 residues: MSNLKEIKRKIKSVHNTQKTTNAMKLVSTAKLKKAEEAAKRSKIYAQKIDEILSEISFQINKIVHNEDDVRLSLFHKKEQIKTVDLIFITADKGLCGGFNIKTLKTVSEMLKEYEAKNINIRLRAIGKTGIEYFNFQKIELLEKYFHLSSSPDYEKACEVIHAAVDDFLNGNTDEVILVHNGYKNMITQELKINHLIPVEPKSIEQTHNSLLELEPEGTELLEDLMKTYFEYNMYYALIDSLAAEHSARMQAMDNATNNAKARVKQLNLAYNKARQESITTELIEIISGVESMK.

Belongs to the ATPase gamma chain family. As to quaternary structure, F-type ATPases have 2 components, CF(1) - the catalytic core - and CF(0) - the membrane proton channel. CF(1) has five subunits: alpha(3), beta(3), gamma(1), delta(1), epsilon(1). CF(0) has three main subunits: a, b and c.

The protein resides in the cell inner membrane. Its function is as follows. Produces ATP from ADP in the presence of a proton gradient across the membrane. The gamma chain is believed to be important in regulating ATPase activity and the flow of protons through the CF(0) complex. In Campylobacter jejuni (strain RM1221), this protein is ATP synthase gamma chain.